The sequence spans 114 residues: uncharacterized protein (114 aa).

An HIT domain is found at 6–114 (IFSKIIRREI…GGRPFSWPPG (109 aa)). The short motif at 98 to 102 (HLHLH) is the Histidine triad motif element.

This is an uncharacterized protein from Synechocystis sp. (strain ATCC 27184 / PCC 6803 / Kazusa).